Consider the following 137-residue polypeptide: BolA-like protein 1 (137 aa).

Position 81 is a phosphoserine (serine 81). The disordered stretch occupies residues 115-137 (RENPQLDISPPCLGGSKKTRGTS).

This sequence belongs to the BolA/IbaG family. As to quaternary structure, interacts with GLRX5.

The protein localises to the mitochondrion. Its function is as follows. Acts as a mitochondrial iron-sulfur (Fe-S) cluster assembly factor that facilitates (Fe-S) cluster insertion into a subset of mitochondrial proteins. Probably acts together with the monothiol glutaredoxin GLRX5. May protect cells against oxidative stress. This chain is BolA-like protein 1 (Bola1), found in Mus musculus (Mouse).